Here is a 156-residue protein sequence, read N- to C-terminus: Small ribosomal subunit protein uS7 (156 aa).

This sequence belongs to the universal ribosomal protein uS7 family. As to quaternary structure, part of the 30S ribosomal subunit. Contacts proteins S9 and S11.

One of the primary rRNA binding proteins, it binds directly to 16S rRNA where it nucleates assembly of the head domain of the 30S subunit. Is located at the subunit interface close to the decoding center, probably blocks exit of the E-site tRNA. In Erythrobacter litoralis (strain HTCC2594), this protein is Small ribosomal subunit protein uS7.